The following is a 291-amino-acid chain: HTH-type transcriptional regulator DgcR (291 aa).

One can recognise an HTH lysR-type domain in the interval 1–58; it reads MRLRHIEVFHAIYTTGSITNAAKALHVSQPSVSKVLSHAEMQLGFKLFERVKGRLIPT. A DNA-binding region (H-T-H motif) is located at residues 18–37; it reads ITNAAKALHVSQPSVSKVLS.

This sequence belongs to the LysR transcriptional regulatory family.

Transcriptional regulator that positively regulates the expression of the D-Glu gene cluster (DGC). The cluster includes dgcN and dgcA, which are involved in a deamination-independent D-glutamate degradation pathway, dgcR itself, dgcT, dgcP and dgcH. Acts by binding the consensus sequence upstream of dgcR, dgcT, dgcP and dgcH. This Pseudoalteromonas sp protein is HTH-type transcriptional regulator DgcR.